The sequence spans 373 residues: tRNA-specific 2-thiouridylase MnmA (373 aa).

ATP is bound by residues Gly-12–Ser-19 and Met-38. The interaction with target base in tRNA stretch occupies residues Asn-98–Asp-100. The active-site Nucleophile is Cys-103. Cys-103 and Cys-200 are joined by a disulfide. An ATP-binding site is contributed by Gly-127. The tract at residues Lys-150–Gln-152 is interaction with tRNA. The active-site Cysteine persulfide intermediate is Cys-200. The segment at Arg-312 to Tyr-313 is interaction with tRNA.

Belongs to the MnmA/TRMU family.

It is found in the cytoplasm. The enzyme catalyses S-sulfanyl-L-cysteinyl-[protein] + uridine(34) in tRNA + AH2 + ATP = 2-thiouridine(34) in tRNA + L-cysteinyl-[protein] + A + AMP + diphosphate + H(+). In terms of biological role, catalyzes the 2-thiolation of uridine at the wobble position (U34) of tRNA, leading to the formation of s(2)U34. This chain is tRNA-specific 2-thiouridylase MnmA, found in Streptococcus thermophilus (strain ATCC BAA-491 / LMD-9).